Consider the following 333-residue polypeptide: DNA-directed RNA polymerase subunit alpha (333 aa).

An alpha N-terminal domain (alpha-NTD) region spans residues 1 to 233; it reads MVREKVKVST…NLFIPFLHVE (233 aa). The segment at 267–333 is alpha C-terminal domain (alpha-CTD); it reads LVFQYIFIDQ…LEKNRKFISN (67 aa).

The protein belongs to the RNA polymerase alpha chain family. In terms of assembly, in plastids the minimal PEP RNA polymerase catalytic core is composed of four subunits: alpha, beta, beta', and beta''. When a (nuclear-encoded) sigma factor is associated with the core the holoenzyme is formed, which can initiate transcription.

The protein localises to the plastid. Its subcellular location is the chloroplast. It carries out the reaction RNA(n) + a ribonucleoside 5'-triphosphate = RNA(n+1) + diphosphate. DNA-dependent RNA polymerase catalyzes the transcription of DNA into RNA using the four ribonucleoside triphosphates as substrates. In Aethionema grandiflorum (Persian stone-cress), this protein is DNA-directed RNA polymerase subunit alpha.